Consider the following 766-residue polypeptide: Protein zer-1 homolog (766 aa).

At A2 the chain carries N-acetylalanine. LRR repeat units follow at residues 226–245, 246–268, and 278–302; these read SLVLYNMDLSDDHIRVIVQL, HKLRHLDISRDRLSSYYKFKLTR, and LGNLMSLDISGHMILENCSISKMEE. ARM repeat units follow at residues 427–467, 511–556, 558–600, 602–643, and 714–756; these read RSEQ…NFSI, DNDH…NITD, TPDN…NVAE, KELR…HIMF, and PDKY…HCSN.

The protein belongs to the zyg-11 family. Interacts with the ELOC-ELOB/Elongin BC complex. Part of an E3 ubiquitin ligase complex including ZER1, CUL2 and Elongin BC. As to expression, expressed in testis, spermatocytes and spermatids (at protein level). Expressed in spermatocytes, spermatids, prostate, skeletal muscle, ovary, small intestine, heart, brain and pancreas.

Its function is as follows. Serves as substrate adapter subunit in the E3 ubiquitin ligase complex ZYG11B-CUL2-Elongin BC. Acts to target substrates bearing N-terminal degrons for proteasomal degradation with the first four residues of substrates being the key recognition elements. Involved in the clearance of proteolytic fragments generated by caspase cleavage during apoptosis since N-terminal glycine degrons are strongly enriched at caspase cleavage sites. Also important in the quality control of protein N-myristoylation in which N-terminal glycine degrons are conditionally exposed after a failure of N-myristoylation. The polypeptide is Protein zer-1 homolog (Homo sapiens (Human)).